Reading from the N-terminus, the 317-residue chain is Transaldolase (317 aa).

The Schiff-base intermediate with substrate role is filled by lysine 126.

It belongs to the transaldolase family. Type 1 subfamily. In terms of assembly, homodimer.

Its subcellular location is the cytoplasm. The enzyme catalyses D-sedoheptulose 7-phosphate + D-glyceraldehyde 3-phosphate = D-erythrose 4-phosphate + beta-D-fructose 6-phosphate. It participates in carbohydrate degradation; pentose phosphate pathway; D-glyceraldehyde 3-phosphate and beta-D-fructose 6-phosphate from D-ribose 5-phosphate and D-xylulose 5-phosphate (non-oxidative stage): step 2/3. Functionally, transaldolase is important for the balance of metabolites in the pentose-phosphate pathway. This is Transaldolase from Burkholderia pseudomallei (strain K96243).